Reading from the N-terminus, the 314-residue chain is 2,3-dihydroxyphenylpropionate/2,3-dihydroxicinnamic acid 1,2-dioxygenase (314 aa).

The active-site Proton donor is H115. H179 acts as the Proton acceptor in catalysis.

This sequence belongs to the LigB/MhpB extradiol dioxygenase family. As to quaternary structure, homotetramer. Fe(2+) is required as a cofactor.

It carries out the reaction 3-(2,3-dihydroxyphenyl)propanoate + O2 = (2Z,4E)-2-hydroxy-6-oxonona-2,4-dienedioate + H(+). The enzyme catalyses (2E)-3-(2,3-dihydroxyphenyl)prop-2-enoate + O2 = (2Z,4E,7E)-2-hydroxy-6-oxonona-2,4,7-trienedioate + H(+). It participates in aromatic compound metabolism; 3-phenylpropanoate degradation. Its function is as follows. Catalyzes the non-heme iron(II)-dependent oxidative cleavage of 2,3-dihydroxyphenylpropionic acid and 2,3-dihydroxicinnamic acid into 2-hydroxy-6-ketononadienedioate and 2-hydroxy-6-ketononatrienedioate, respectively. The sequence is that of 2,3-dihydroxyphenylpropionate/2,3-dihydroxicinnamic acid 1,2-dioxygenase from Klebsiella pneumoniae subsp. pneumoniae (strain ATCC 700721 / MGH 78578).